The sequence spans 33 residues: GFKGAFKNVMFGIAKSAGKSALNALACKIDKSC.

The cysteines at positions 27 and 33 are disulfide-linked.

Expressed by the skin glands.

The protein localises to the secreted. Its function is as follows. Has antibacterial activity against the Gram-positive bacterium S.aureus ATCC 25923 (MIC=9 uM) and the Gram-negative bacterium E.coli ATCC 25726 (MIC=9 uM). In Pulchrana picturata (Malaysian fire frog), this protein is Brevinin-2PTb.